The primary structure comprises 901 residues: Protein translocase subunit SecA (901 aa).

ATP-binding positions include Gln87, Gly105–Thr109, and Asp512. Residues Ala868 to Gln901 are disordered. Zn(2+) contacts are provided by Cys885, Cys887, Cys896, and His897. Over residues Lys891 to Gln901 the composition is skewed to basic residues.

The protein belongs to the SecA family. As to quaternary structure, monomer and homodimer. Part of the essential Sec protein translocation apparatus which comprises SecA, SecYEG and auxiliary proteins SecDF-YajC and YidC. The cofactor is Zn(2+).

The protein localises to the cell inner membrane. The protein resides in the cytoplasm. The enzyme catalyses ATP + H2O + cellular proteinSide 1 = ADP + phosphate + cellular proteinSide 2.. Its function is as follows. Part of the Sec protein translocase complex. Interacts with the SecYEG preprotein conducting channel. Has a central role in coupling the hydrolysis of ATP to the transfer of proteins into and across the cell membrane, serving both as a receptor for the preprotein-SecB complex and as an ATP-driven molecular motor driving the stepwise translocation of polypeptide chains across the membrane. The sequence is that of Protein translocase subunit SecA from Escherichia coli O45:K1 (strain S88 / ExPEC).